Consider the following 203-residue polypeptide: Peptide deformylase (203 aa).

Residues Cys130 and His173 each coordinate Fe cation. The active site involves Glu174. His177 provides a ligand contact to Fe cation.

Belongs to the polypeptide deformylase family. Fe(2+) is required as a cofactor.

The catalysed reaction is N-terminal N-formyl-L-methionyl-[peptide] + H2O = N-terminal L-methionyl-[peptide] + formate. Functionally, removes the formyl group from the N-terminal Met of newly synthesized proteins. Requires at least a dipeptide for an efficient rate of reaction. N-terminal L-methionine is a prerequisite for activity but the enzyme has broad specificity at other positions. This is Peptide deformylase from Streptococcus pneumoniae serotype 19F (strain G54).